We begin with the raw amino-acid sequence, 346 residues long: MMAGCGETDHSINMLPTNRKANESCSNTAPSLTVPECAICLQTCVHPVSLPCKHVFCYLCVKGASWLGKRCALCRQEIPEDFLDRPTLLSPELKAASRGNGEYAWYYEGRNGWWQYDERTSRELEDAFSKGKKSTEMLIAGFLYVADLENMVQYRRNEHGRRRKIKRDIIDIPKKGVAGLRLDCDANTVNLARESSADGADSVPAQSGASVQSSSVRPLTSVDGQLTSPATPSPDVGTSLEDSFAHLQLGGDSIAERSHRGEGEEEHESPSSGRVPAPDTSIEETESDASSDSEDVSALVAQHSLTQQRLLVPNPSQTVSDRSVAAGGIVSVRSRRPDGQCTVTEV.

The segment at 37–75 adopts an RING-type zinc-finger fold; the sequence is CAICLQTCVHPVSLPCKHVFCYLCVKGASWLGKRCALCR. Residues 91-167 enclose the WWE domain; that stretch reads PELKAASRGN…EHGRRRKIKR (77 aa). 2 disordered regions span residues 195 to 240 and 256 to 301; these read SSAD…GTSL and ERSH…ALVA. A compositionally biased stretch (low complexity) spans 202 to 216; it reads SVPAQSGASVQSSSV. Acidic residues predominate over residues 281 to 295; it reads SIEETESDASSDSED.

Interacts with poly-ADP-ribosylated AXIN1, AXIN2, BLZF1 and CASC3. Ubiquitinated; autoubiquitinated. Autoubiquitination is enhanced upon poly(ADP-ribose)-binding.

Its subcellular location is the cytoplasm. The protein localises to the cytosol. The catalysed reaction is S-ubiquitinyl-[E2 ubiquitin-conjugating enzyme]-L-cysteine + [acceptor protein]-L-lysine = [E2 ubiquitin-conjugating enzyme]-L-cysteine + N(6)-ubiquitinyl-[acceptor protein]-L-lysine.. The protein operates within protein modification; protein ubiquitination. E3 ubiquitin-protein ligase that specifically binds poly-ADP-ribosylated proteins and mediates their ubiquitination and subsequent degradation. Acts as an activator of the Wnt signaling pathway by mediating the ubiquitination of poly-ADP-ribosylated AXIN1 and AXIN2, 2 key components of the beta-catenin destruction complex. Acts in cooperation with tankyrase proteins (TNKS and TNKS2), which mediate poly-ADP-ribosylation of target proteins AXIN1, AXIN2, BLZF1, CASC3, TNKS and TNKS2. Recognizes and binds tankyrase-dependent poly-ADP-ribosylated proteins via its WWE domain and mediates their ubiquitination. This is E3 ubiquitin-protein ligase RNF146-A (RNF146A) from Bos taurus (Bovine).